The sequence spans 326 residues: GMP reductase (326 aa).

Cys-175 acts as the Thioimidate intermediate in catalysis. 204–227 (IIADGGIRTHGDIAKSIRFGATMV) serves as a coordination point for NADP(+).

This sequence belongs to the IMPDH/GMPR family. GuaC type 2 subfamily.

The enzyme catalyses IMP + NH4(+) + NADP(+) = GMP + NADPH + 2 H(+). Its function is as follows. Catalyzes the irreversible NADPH-dependent deamination of GMP to IMP. It functions in the conversion of nucleobase, nucleoside and nucleotide derivatives of G to A nucleotides, and in maintaining the intracellular balance of A and G nucleotides. The protein is GMP reductase (guaC) of Bacillus subtilis (strain 168).